The primary structure comprises 696 residues: Methionine synthase reductase (696 aa).

Residues 4–147 (FLLLYATQRG…VVEPWIDGLW (144 aa)) form the Flavodoxin-like domain. FMN contacts are provided by residues 10–14 (TQRGQ) and 93–124 (LLGL…QRFY). The tract at residues 166–245 (TLSRASDAPL…SSLSIPAVPP (80 aa)) is hinge. A phosphoserine mark is found at Ser-171 and Ser-188. An FAD-binding FR-type domain is found at 269-531 (DPSFQVPISK…PRATNAFHLP (263 aa)). Position 289 (Lys-289) interacts with NADP(+). Residues 449–452 (RPYS) and 485–488 (GVCT) each bind FAD. Residues 608-609 (SR), 622-624 (YVQ), and Asp-657 contribute to the NADP(+) site. Trp-695 contacts FAD.

In terms of assembly, forms a multiprotein complex with MMACHC, MMADHC and MTR. It depends on FAD as a cofactor. FMN is required as a cofactor.

The protein localises to the cytoplasm. The enzyme catalyses 2 methylcob(III)alamin-[methionine synthase] + 2 S-adenosyl-L-homocysteine + NADP(+) + H(+) = 2 cob(II)alamin-[methionine synthase] + 2 S-adenosyl-L-methionine + NADPH. It catalyses the reaction 2 cob(II)alamin + A + 2 H2O + 2 H(+) = 2 aquacob(III)alamin + AH2. Key enzyme in methionine and folate homeostasis responsible for the reactivation of methionine synthase (MTR/MS) activity by catalyzing the reductive methylation of MTR-bound cob(II)alamin. Cobalamin (vitamin B12) forms a complex with MTR to serve as an intermediary in methyl transfer reactions that cycles between MTR-bound methylcob(III)alamin and MTR bound-cob(I)alamin forms, and occasional oxidative escape of the cob(I)alamin intermediate during the catalytic cycle leads to the inactive cob(II)alamin species. The processing of cobalamin in the cytosol occurs in a multiprotein complex composed of at least MMACHC, MMADHC, MTRR and MTR which may contribute to shuttle safely and efficiently cobalamin towards MTR in order to produce methionine. Also necessary for the utilization of methyl groups from the folate cycle, thereby affecting transgenerational epigenetic inheritance. Also acts as a molecular chaperone for methionine synthase by stabilizing apoMTR and incorporating methylcob(III)alamin into apoMTR to form the holoenzyme. Also serves as an aquacob(III)alamin reductase by reducing aquacob(III)alamin to cob(II)alamin; this reduction leads to stimulation of the conversion of apoMTR and aquacob(III)alamin to MTR holoenzyme. This chain is Methionine synthase reductase, found in Mus musculus (Mouse).